A 387-amino-acid polypeptide reads, in one-letter code: Putative ankyrin repeat protein RBE_0984 (387 aa).

ANK repeat units follow at residues 50-79 (YGNTPLSLALNKKLEAVCEVLVSRMSDKDI), 88-119 (HRETYFTLAAIKGFKGVCENLAPRMSNEAINV), 123-154 (RKHTALTLAADKNLPQVCIKLIPIMFDEVINV), 159-188 (HKDSALRKAIWNDLDVVCQMLIPVTSKENI), and 210-239 (VCKMLISRMIEDNSLDIINHVISKGELKGE). Coiled coils occupy residues 251 to 278 (FEDICELLQKSHEEYKEQKQKENEKKCE) and 311 to 352 (SISA…ALEK).

This chain is Putative ankyrin repeat protein RBE_0984, found in Rickettsia bellii (strain RML369-C).